The following is a 450-amino-acid chain: tRNA modification GTPase MnmE (450 aa).

Residues arginine 23, glutamate 79, and lysine 118 each contribute to the (6S)-5-formyl-5,6,7,8-tetrahydrofolate site. The region spanning 214-374 (GITLILVGKP…LKEHILNKVG (161 aa)) is the TrmE-type G domain. Asparagine 224 serves as a coordination point for K(+). Residues 224–229 (NAGKSS), 243–249 (TSIAGTT), and 268–271 (DTAG) each bind GTP. Serine 228 provides a ligand contact to Mg(2+). K(+) contacts are provided by threonine 243, isoleucine 245, and threonine 248. A Mg(2+)-binding site is contributed by threonine 249. Lysine 450 lines the (6S)-5-formyl-5,6,7,8-tetrahydrofolate pocket.

Belongs to the TRAFAC class TrmE-Era-EngA-EngB-Septin-like GTPase superfamily. TrmE GTPase family. In terms of assembly, homodimer. Heterotetramer of two MnmE and two MnmG subunits. Requires K(+) as cofactor.

It is found in the cytoplasm. Exhibits a very high intrinsic GTPase hydrolysis rate. Involved in the addition of a carboxymethylaminomethyl (cmnm) group at the wobble position (U34) of certain tRNAs, forming tRNA-cmnm(5)s(2)U34. This Francisella tularensis subsp. tularensis (strain WY96-3418) protein is tRNA modification GTPase MnmE.